The following is a 175-amino-acid chain: uncharacterized protein (175 aa).

Belongs to the asfivirus B175L family.

This is an uncharacterized protein from Ornithodoros (relapsing fever ticks).